A 319-amino-acid polypeptide reads, in one-letter code: HPr kinase/phosphorylase (319 aa).

Active-site residues include histidine 141 and lysine 162. 156-163 is a binding site for ATP; sequence GNSGVGKS. Serine 163 is a Mg(2+) binding site. Catalysis depends on aspartate 180, which acts as the Proton acceptor; for phosphorylation activity. Proton donor; for dephosphorylation activity. The important for the catalytic mechanism of both phosphorylation and dephosphorylation stretch occupies residues 204–213; that stretch reads MEIRGIGIID. Mg(2+) is bound at residue glutamate 205. Arginine 246 is an active-site residue. The important for the catalytic mechanism of dephosphorylation stretch occupies residues 267 to 272; the sequence is PVKVGR.

This sequence belongs to the HPrK/P family. Homohexamer. Mg(2+) serves as cofactor.

It catalyses the reaction [HPr protein]-L-serine + ATP = [HPr protein]-O-phospho-L-serine + ADP + H(+). The catalysed reaction is [HPr protein]-O-phospho-L-serine + phosphate + H(+) = [HPr protein]-L-serine + diphosphate. Catalyzes the ATP- as well as the pyrophosphate-dependent phosphorylation of a specific serine residue in HPr, a phosphocarrier protein of the phosphoenolpyruvate-dependent sugar phosphotransferase system (PTS). HprK/P also catalyzes the pyrophosphate-producing, inorganic phosphate-dependent dephosphorylation (phosphorolysis) of seryl-phosphorylated HPr (P-Ser-HPr). The two antagonistic activities of HprK/P are regulated by several intracellular metabolites, which change their concentration in response to the absence or presence of rapidly metabolisable carbon sources (glucose, fructose, etc.) in the growth medium. Therefore, by controlling the phosphorylation state of HPr, HPrK/P is a sensor enzyme that plays a major role in the regulation of carbon metabolism and sugar transport: it mediates carbon catabolite repression (CCR), and regulates PTS-catalyzed carbohydrate uptake and inducer exclusion. The polypeptide is HPr kinase/phosphorylase (Lactobacillus johnsonii (strain CNCM I-12250 / La1 / NCC 533)).